The sequence spans 544 residues: uncharacterized protein (544 aa).

Transmembrane regions (helical) follow at residues isoleucine 31–alanine 51, glycine 52–leucine 72, leucine 84–isoleucine 104, tryptophan 116–valine 136, phenylalanine 162–glycine 182, phenylalanine 191–leucine 211, leucine 230–phenylalanine 250, glycine 257–phenylalanine 277, phenylalanine 318–isoleucine 338, threonine 356–alanine 376, valine 383–glutamine 403, valine 407–isoleucine 427, phenylalanine 450–valine 470, and phenylalanine 501–tyrosine 521.

The protein belongs to the sodium:galactoside symporter (TC 2.A.2) family.

Its subcellular location is the cell membrane. This is an uncharacterized protein from Synechocystis sp. (strain ATCC 27184 / PCC 6803 / Kazusa).